Here is an 82-residue protein sequence, read N- to C-terminus: Delta-actitoxin-Aeq2a (82 aa).

An N-terminal signal peptide occupies residues 1–19 (MNRLMILVFAAVFLALASA). A propeptide spanning residues 20–26 (DEDVDIA) is cleaved from the precursor. Disulfide bonds link Cys-32-Cys-79, Cys-34-Cys-69, and Cys-62-Cys-80.

Belongs to the sea anemone sodium channel inhibitory toxin family. Type I subfamily.

The protein localises to the secreted. Its subcellular location is the nematocyst. Its function is as follows. Binds specifically to voltage-gated sodium channels (Nav), thereby delaying their inactivation during signal transduction. Causes death to crabs (minimum lethal dose of 25 ug/kg) and mice. In Actinia equina (Beadlet anemone), this protein is Delta-actitoxin-Aeq2a.